The following is a 297-amino-acid chain: E3 ubiquitin-protein ligase TRIM52 (297 aa).

The segment at Cys20–Glu62 adopts an RING-type; degenerate zinc-finger fold. An important for rapid proteolytic degradation by the proteasome region spans residues Val72–Pro167. The B box-type zinc-finger motif lies at Asn222–Leu263. Positions 227, 230, 249, and 255 each coordinate Zn(2+).

Belongs to the TRIM/RBCC family. In terms of assembly, (Microbial infection) Interacts with Japanese encephalitis virus non-structural protein 2 (NS2A); mediates the ubiquitination of NS2A, targeting it for proteasome-mediated degradation. Post-translationally, autoubiquitinated. Polyubiquitinated. Undergoes extremely rapid proteolytic degradation by the proteasome.

It localises to the cytoplasm. It is found in the cytosol. Its subcellular location is the nucleus. It catalyses the reaction S-ubiquitinyl-[E2 ubiquitin-conjugating enzyme]-L-cysteine + [acceptor protein]-L-lysine = [E2 ubiquitin-conjugating enzyme]-L-cysteine + N(6)-ubiquitinyl-[acceptor protein]-L-lysine.. Its pathway is protein modification; protein ubiquitination. Functionally, E3 ubiquitin-protein ligase. Positively regulates the NF-kappa-B signaling pathway. Its function is as follows. (Microbial infection) Exhibits antiviral activity against Japanese encephalitis virus (JEV). Ubiquitinates the viral non-structural protein 2 (NS2A) and targets it for proteasome-mediated degradation. This chain is E3 ubiquitin-protein ligase TRIM52 (TRIM52), found in Homo sapiens (Human).